The chain runs to 297 residues: Acetylglutamate kinase (297 aa).

Residues 70 to 71 (GG), R92, and N194 each bind substrate.

This sequence belongs to the acetylglutamate kinase family. ArgB subfamily.

Its subcellular location is the cytoplasm. The enzyme catalyses N-acetyl-L-glutamate + ATP = N-acetyl-L-glutamyl 5-phosphate + ADP. It participates in amino-acid biosynthesis; L-arginine biosynthesis; N(2)-acetyl-L-ornithine from L-glutamate: step 2/4. In terms of biological role, catalyzes the ATP-dependent phosphorylation of N-acetyl-L-glutamate. The sequence is that of Acetylglutamate kinase from Herminiimonas arsenicoxydans.